The following is a 501-amino-acid chain: Aldehyde dehydrogenase 1A1 (501 aa).

Ser-2 bears the N-acetylserine mark. N6-acetyllysine is present on residues Lys-91 and Lys-128. Residues 167-170 (IPWN), 193-196 (KPAE), 226-227 (GP), and 246-247 (GS) each bind NAD(+). N6-acetyllysine is present on Lys-252. Glu-269 functions as the Proton acceptor in the catalytic mechanism. 269–271 (ELG) is a binding site for NAD(+). Cys-303 functions as the Nucleophile in the catalytic mechanism. The segment at 336–501 (LTPGVSQGPQ…VTIKISQKNS (166 aa)) is mediates interaction with PRMT3. Thr-337 carries the phosphothreonine modification. Residue 349–353 (EQYEK) participates in NAD(+) binding. An N6-acetyllysine mark is found at Lys-353 and Lys-367. 400–402 (EIF) is a binding site for NAD(+). Lys-410 carries the N6-acetyllysine modification. At Ser-413 the chain carries Phosphoserine. 2 positions are modified to N6-acetyllysine: Lys-419 and Lys-495.

It belongs to the aldehyde dehydrogenase family. Homotetramer. Interacts with PRMT3; the interaction is direct, inhibits ALDH1A1 aldehyde dehydrogenase activity and is independent of the methyltransferase activity of PRMT3. Post-translationally, the N-terminus is blocked most probably by acetylation.

The protein resides in the cytoplasm. Its subcellular location is the cytosol. It localises to the cell projection. The protein localises to the axon. It carries out the reaction an aldehyde + NAD(+) + H2O = a carboxylate + NADH + 2 H(+). It catalyses the reaction all-trans-retinal + NAD(+) + H2O = all-trans-retinoate + NADH + 2 H(+). The catalysed reaction is 9-cis-retinal + NAD(+) + H2O = 9-cis-retinoate + NADH + 2 H(+). The enzyme catalyses 11-cis-retinal + NAD(+) + H2O = 11-cis-retinoate + NADH + 2 H(+). It carries out the reaction 13-cis-retinal + NAD(+) + H2O = 13-cis-retinoate + NADH + 2 H(+). It catalyses the reaction 3-deoxyglucosone + NAD(+) + H2O = 2-dehydro-3-deoxy-D-gluconate + NADH + 2 H(+). The catalysed reaction is (E)-4-hydroxynon-2-enal + NAD(+) + H2O = (E)-4-hydroxynon-2-enoate + NADH + 2 H(+). The enzyme catalyses malonaldehyde + NAD(+) + H2O = 3-oxopropanoate + NADH + 2 H(+). It carries out the reaction hexanal + NAD(+) + H2O = hexanoate + NADH + 2 H(+). It catalyses the reaction propanal + NAD(+) + H2O = propanoate + NADH + 2 H(+). The catalysed reaction is acetaldehyde + NAD(+) + H2O = acetate + NADH + 2 H(+). The enzyme catalyses benzaldehyde + NAD(+) + H2O = benzoate + NADH + 2 H(+). It carries out the reaction 4-aminobutanal + NAD(+) + H2O = 4-aminobutanoate + NADH + 2 H(+). Its pathway is cofactor metabolism; retinol metabolism. Its activity is regulated as follows. Inhibited by duocarmycin analogs. In terms of biological role, cytosolic dehydrogenase that catalyzes the irreversible oxidation of a wide range of aldehydes to their corresponding carboxylic acid. Functions downstream of retinol dehydrogenases and catalyzes the oxidation of retinaldehyde into retinoic acid, the second step in the oxidation of retinol/vitamin A into retinoic acid. This pathway is crucial to control the levels of retinol and retinoic acid, two important molecules which excess can be teratogenic and cytotoxic. Also oxidizes aldehydes resulting from lipid peroxidation like (E)-4-hydroxynon-2-enal/HNE, malonaldehyde and hexanal that form protein adducts and are highly cytotoxic. By participating for instance to the clearance of (E)-4-hydroxynon-2-enal/HNE in the lens epithelium prevents the formation of HNE-protein adducts and lens opacification. Also functions downstream of fructosamine-3-kinase in the fructosamine degradation pathway by catalyzing the oxidation of 3-deoxyglucosone, the carbohydrate product of fructosamine 3-phosphate decomposition, which is itself a potent glycating agent that may react with lysine and arginine side-chains of proteins. Also has an aminobutyraldehyde dehydrogenase activity and is probably part of an alternative pathway for the biosynthesis of GABA/4-aminobutanoate in midbrain, thereby playing a role in GABAergic synaptic transmission. The chain is Aldehyde dehydrogenase 1A1 from Ovis aries (Sheep).